The chain runs to 273 residues: Large ribosomal subunit protein uL2 (273 aa).

The interval 221–262 (RGTAMNPVDHPHGGGEGRNFGKHPVTPWGVQTKGKKTRHNKR) is disordered. Over residues 253 to 262 (KGKKTRHNKR) the composition is skewed to basic residues.

This sequence belongs to the universal ribosomal protein uL2 family. In terms of assembly, part of the 50S ribosomal subunit. Forms a bridge to the 30S subunit in the 70S ribosome.

One of the primary rRNA binding proteins. Required for association of the 30S and 50S subunits to form the 70S ribosome, for tRNA binding and peptide bond formation. It has been suggested to have peptidyltransferase activity; this is somewhat controversial. Makes several contacts with the 16S rRNA in the 70S ribosome. In Haemophilus ducreyi (strain 35000HP / ATCC 700724), this protein is Large ribosomal subunit protein uL2.